Reading from the N-terminus, the 155-residue chain is MPMARVNYAYKPEDETKAAKAMGYEMPISFKHAVEICRAIRGKKIEEARKLLEDVVEMKRAIPFKRHKKKVAHRRGLEKWYAGRYPQKAAKYVLKVLRNLEANAEYKGLDVENLVIVHAQAQKGRVIERYMPRAFGRATPRFQQLTTVELVAEVR.

This sequence belongs to the universal ribosomal protein uL22 family. Part of the 50S ribosomal subunit.

Its function is as follows. This protein binds specifically to 23S rRNA. It makes multiple contacts with different domains of the 23S rRNA in the assembled 50S subunit and ribosome. In terms of biological role, the globular domain of the protein is located near the polypeptide exit tunnel on the outside of the subunit, while an extended beta-hairpin is found that lines the wall of the exit tunnel in the center of the 70S ribosome. The chain is Large ribosomal subunit protein uL22 from Archaeoglobus fulgidus (strain ATCC 49558 / DSM 4304 / JCM 9628 / NBRC 100126 / VC-16).